We begin with the raw amino-acid sequence, 277 residues long: MQLLALTLALCASIAALPTQQTPLPLEDPIKSPFPIHHSCNATEQRQLATALQETVTLAEHAKDHILRWGNESAIYRKYFGDRPSLTAIGAYDIIVNGNPDNILFRCDNPDGNCALEGWGGHWRGENASDETVICELSYTTRRSLSTMCSQGYTISEWETNTFWAGDLLHRLYHMPAIGQGLVEHYADGYEGVLELAEGNRTEAVHDSETLQYFALEVYAYDVAVPGIGCVGGEEENDGQGEEQTEEPAQDDQQDEAAEEEIPENCHTHEGGELHCT.

The signal sequence occupies residues 1–16 (MQLLALTLALCASIAA). Residues Asn-41, Asn-71, Asn-127, and Asn-200 are each glycosylated (N-linked (GlcNAc...) asparagine). The tract at residues 230–277 (CVGGEEENDGQGEEQTEEPAQDDQQDEAAEEEIPENCHTHEGGELHCT) is disordered. Acidic residues predominate over residues 233 to 263 (GEEENDGQGEEQTEEPAQDDQQDEAAEEEIP). Positions 264-277 (ENCHTHEGGELHCT) are enriched in basic and acidic residues.

It belongs to the ZPS1 family.

The polypeptide is Antigen 1 (aspnd1) (Emericella nidulans (strain FGSC A4 / ATCC 38163 / CBS 112.46 / NRRL 194 / M139) (Aspergillus nidulans)).